We begin with the raw amino-acid sequence, 316 residues long: 4-hydroxy-3-methylbut-2-enyl diphosphate reductase (316 aa).

Residue C12 coordinates [4Fe-4S] cluster. The (2E)-4-hydroxy-3-methylbut-2-enyl diphosphate site is built by H41 and H74. Dimethylallyl diphosphate contacts are provided by H41 and H74. Isopentenyl diphosphate is bound by residues H41 and H74. C96 is a [4Fe-4S] cluster binding site. H124 contacts (2E)-4-hydroxy-3-methylbut-2-enyl diphosphate. H124 provides a ligand contact to dimethylallyl diphosphate. Position 124 (H124) interacts with isopentenyl diphosphate. E126 (proton donor) is an active-site residue. (2E)-4-hydroxy-3-methylbut-2-enyl diphosphate is bound at residue T167. C197 is a [4Fe-4S] cluster binding site. (2E)-4-hydroxy-3-methylbut-2-enyl diphosphate-binding residues include S225, S226, N227, and S269. 4 residues coordinate dimethylallyl diphosphate: S225, S226, N227, and S269. S225, S226, N227, and S269 together coordinate isopentenyl diphosphate.

It belongs to the IspH family. In terms of assembly, homodimer. The cofactor is [4Fe-4S] cluster.

It carries out the reaction isopentenyl diphosphate + 2 oxidized [2Fe-2S]-[ferredoxin] + H2O = (2E)-4-hydroxy-3-methylbut-2-enyl diphosphate + 2 reduced [2Fe-2S]-[ferredoxin] + 2 H(+). The enzyme catalyses dimethylallyl diphosphate + 2 oxidized [2Fe-2S]-[ferredoxin] + H2O = (2E)-4-hydroxy-3-methylbut-2-enyl diphosphate + 2 reduced [2Fe-2S]-[ferredoxin] + 2 H(+). The protein operates within isoprenoid biosynthesis; dimethylallyl diphosphate biosynthesis; dimethylallyl diphosphate from (2E)-4-hydroxy-3-methylbutenyl diphosphate: step 1/1. Its pathway is isoprenoid biosynthesis; isopentenyl diphosphate biosynthesis via DXP pathway; isopentenyl diphosphate from 1-deoxy-D-xylulose 5-phosphate: step 6/6. In terms of biological role, catalyzes the conversion of 1-hydroxy-2-methyl-2-(E)-butenyl 4-diphosphate (HMBPP) into a mixture of isopentenyl diphosphate (IPP) and dimethylallyl diphosphate (DMAPP). Acts in the terminal step of the DOXP/MEP pathway for isoprenoid precursor biosynthesis. This Sodalis glossinidius (strain morsitans) protein is 4-hydroxy-3-methylbut-2-enyl diphosphate reductase.